The primary structure comprises 495 residues: Lysine--tRNA ligase (495 aa).

Mg(2+)-binding residues include Glu406 and Glu413.

The protein belongs to the class-II aminoacyl-tRNA synthetase family. As to quaternary structure, homodimer. Mg(2+) is required as a cofactor.

The protein resides in the cytoplasm. The catalysed reaction is tRNA(Lys) + L-lysine + ATP = L-lysyl-tRNA(Lys) + AMP + diphosphate. The chain is Lysine--tRNA ligase from Staphylococcus epidermidis (strain ATCC 35984 / DSM 28319 / BCRC 17069 / CCUG 31568 / BM 3577 / RP62A).